The primary structure comprises 135 residues: Putative pre-16S rRNA nuclease (135 aa).

It belongs to the YqgF nuclease family.

The protein resides in the cytoplasm. Functionally, could be a nuclease involved in processing of the 5'-end of pre-16S rRNA. This Maridesulfovibrio salexigens (strain ATCC 14822 / DSM 2638 / NCIMB 8403 / VKM B-1763) (Desulfovibrio salexigens) protein is Putative pre-16S rRNA nuclease.